Here is a 151-residue protein sequence, read N- to C-terminus: Putative pre-16S rRNA nuclease (151 aa).

The protein belongs to the YqgF nuclease family.

The protein resides in the cytoplasm. In terms of biological role, could be a nuclease involved in processing of the 5'-end of pre-16S rRNA. The polypeptide is Putative pre-16S rRNA nuclease (Bifidobacterium longum subsp. infantis (strain ATCC 15697 / DSM 20088 / JCM 1222 / NCTC 11817 / S12)).